Here is a 1041-residue protein sequence, read N- to C-terminus: Sodium/potassium-transporting ATPase subunit alpha (1041 aa).

4 helical membrane-spanning segments follow: residues 115–135, 147–167, 312–332, and 338–358; these read FGGF…AYSI, NLYL…FSYY, LITG…FILG, and AVIF…LATV. D394 functions as the 4-aspartylphosphate intermediate in the catalytic mechanism. K526 serves as a coordination point for ATP. A run of 4 helical transmembrane segments spans residues 808 to 828, 870 to 890, 935 to 955, and 970 to 990; these read FLAF…ILCI, MAYG…YFVI, TCHT…LIIC, and WALN…SYCP.

Belongs to the cation transport ATPase (P-type) (TC 3.A.3) family. Type IIC subfamily. The sodium/potassium-transporting ATPase is composed of a catalytic alpha subunit, an auxiliary non-catalytic beta subunit and an additional regulatory subunit. High levels are found in some adult tissues: Malpighian tubules, indirect flight muscles, tubular leg muscles and throughout the nervous system (brain, optic lobes, retina and ventral thoracic neuromere). Lower levels are detected at the posterior end where the reproductive organs and rectum are located.

The protein resides in the cell membrane. It catalyses the reaction K(+)(out) + Na(+)(in) + ATP + H2O = K(+)(in) + Na(+)(out) + ADP + phosphate + H(+). In terms of biological role, this is the catalytic component of the active enzyme, which catalyzes the hydrolysis of ATP coupled with the exchange of sodium and potassium ions across the plasma membrane. This action creates the electrochemical gradient of sodium and potassium ions, providing the energy for active transport of various nutrients. The sequence is that of Sodium/potassium-transporting ATPase subunit alpha (Atpalpha) from Drosophila melanogaster (Fruit fly).